A 175-amino-acid chain; its full sequence is Transcription factor HES-3 (175 aa).

The bHLH domain maps to 1 to 49 (MEKKRRARINLSLEQLRSLLERHYSHQIRKRKLEKADILELSVKYVRSL). Positions 65–98 (YPSGFRGGLPGSSQRLRPGEDDSGLRCPLLLQRR) constitute an Orange domain. Positions 124 to 145 (PGPPAGGSQSPQSPFPPLGGLL) are enriched in low complexity. Residues 124 to 175 (PGPPAGGSQSPQSPFPPLGGLLESSTGILAPPPASNCQAENPRPGFRVWRPW) are disordered. A WRPW motif motif is present at residues 172–175 (WRPW).

Transcription repression requires formation of a complex with a corepressor protein of the Groucho/TLE family. In terms of tissue distribution, expressed exclusively in Purkinje cells.

It is found in the nucleus. Functionally, transcriptional repressor of genes that require a bHLH protein for their transcription. The protein is Transcription factor HES-3 (Hes3) of Rattus norvegicus (Rat).